The primary structure comprises 1331 residues: Beta-mannanase/endoglucanase A (1331 aa).

The N-terminal stretch at 1 to 41 (MRLKTKIRKKWLSVLCTVVFLLNILFIANVTILPKVGAATS) is a signal peptide. The catalytic (mannanase) stretch occupies residues 42 to 325 (NDGVVKIDTS…YKTNAIGTSS (284 aa)). Residue Glu162 is the Proton donor of the active site. The Nucleophile role is filled by Glu257. 3 disordered regions span residues 319 to 363 (NAIG…TPAT), 515 to 566 (PSGA…TPAT), and 717 to 780 (EPSG…PLPT). Low complexity predominate over residues 323–335 (TSSTPTPTSTVTP). The CBM3 1 domain maps to 363 to 516 (TSGQIKVLYA…GVLVWGQEPS (154 aa)). Composition is skewed to pro residues over residues 521 to 541 (APAPTATPTPTPTVTPTPTVT) and 551 to 561 (TPTPTPTPTPV). Residues 566–719 (TGGQIKVLYA…GVLVWGQEPS (154 aa)) enclose the CBM3 2 domain. The segment covering 721–735 (TTPSPTSTPTVTVTP) has biased composition (low complexity). Pro residues-rich tracts occupy residues 736–756 (TPTPTPTPTPTPTVTPTPTVT) and 766–780 (TPTPTPIPTVTPLPT). The tract at residues 781–1331 (ISPSPSVVEI…RNLVFMRALV (551 aa)) is catalytic (endoglucanase).

In the N-terminal section; belongs to the glycosyl hydrolase 5 (cellulase A) family. This sequence in the C-terminal section; belongs to the glycosyl hydrolase 44 (cellulase J) family.

It catalyses the reaction Random hydrolysis of (1-&gt;4)-beta-D-mannosidic linkages in mannans, galactomannans and glucomannans.. It carries out the reaction Endohydrolysis of (1-&gt;4)-beta-D-glucosidic linkages in cellulose, lichenin and cereal beta-D-glucans.. In terms of biological role, degradation of hemicelluloses, the second most abundant polysaccharides in nature. Contains two catalytic domains with mannanase and endoglucanase activities. This is Beta-mannanase/endoglucanase A (manA) from Caldicellulosiruptor saccharolyticus (Caldocellum saccharolyticum).